The primary structure comprises 365 residues: S-adenosylmethionine:tRNA ribosyltransferase-isomerase (365 aa).

Belongs to the QueA family. As to quaternary structure, monomer.

The protein resides in the cytoplasm. It catalyses the reaction 7-aminomethyl-7-carbaguanosine(34) in tRNA + S-adenosyl-L-methionine = epoxyqueuosine(34) in tRNA + adenine + L-methionine + 2 H(+). It functions in the pathway tRNA modification; tRNA-queuosine biosynthesis. In terms of biological role, transfers and isomerizes the ribose moiety from AdoMet to the 7-aminomethyl group of 7-deazaguanine (preQ1-tRNA) to give epoxyqueuosine (oQ-tRNA). The sequence is that of S-adenosylmethionine:tRNA ribosyltransferase-isomerase from Rickettsia rickettsii (strain Iowa).